A 378-amino-acid chain; its full sequence is Chaperone protein DnaJ (378 aa).

The 65-residue stretch at 4–68 (DFYEILGVSR…ETRARYDRFG (65 aa)) folds into the J domain. The CR-type zinc-finger motif lies at 136-218 (GGEKEIRIPH…CGGAGRKQET (83 aa)). Cys-149, Cys-152, Cys-166, Cys-169, Cys-192, Cys-195, Cys-206, and Cys-209 together coordinate Zn(2+). CXXCXGXG motif repeat units lie at residues 149-156 (CKTCSGSG), 166-173 (CGTCNGTG), 192-199 (CPTCNGEG), and 206-213 (CESCGGAG).

It belongs to the DnaJ family. As to quaternary structure, homodimer. The cofactor is Zn(2+).

It localises to the cytoplasm. Participates actively in the response to hyperosmotic and heat shock by preventing the aggregation of stress-denatured proteins and by disaggregating proteins, also in an autonomous, DnaK-independent fashion. Unfolded proteins bind initially to DnaJ; upon interaction with the DnaJ-bound protein, DnaK hydrolyzes its bound ATP, resulting in the formation of a stable complex. GrpE releases ADP from DnaK; ATP binding to DnaK triggers the release of the substrate protein, thus completing the reaction cycle. Several rounds of ATP-dependent interactions between DnaJ, DnaK and GrpE are required for fully efficient folding. Also involved, together with DnaK and GrpE, in the DNA replication of plasmids through activation of initiation proteins. The chain is Chaperone protein DnaJ from Picosynechococcus sp. (strain ATCC 27264 / PCC 7002 / PR-6) (Agmenellum quadruplicatum).